Reading from the N-terminus, the 396-residue chain is Elongation factor Tu (396 aa).

A tr-type G domain is found at 10–206; the sequence is KPHVNVGTIG…ALDTYIPTPE (197 aa). Positions 19-26 are G1; that stretch reads GHVDHGKT. Position 19 to 26 (19 to 26) interacts with GTP; sequence GHVDHGKT. Residue Thr-26 coordinates Mg(2+). Residues 60–64 form a G2 region; that stretch reads GITIN. The interval 81 to 84 is G3; it reads DCPG. GTP-binding positions include 81 to 85 and 136 to 139; these read DCPGH and NKAD. The G4 stretch occupies residues 136–139; the sequence is NKAD. Positions 174–176 are G5; it reads SAK.

The protein belongs to the TRAFAC class translation factor GTPase superfamily. Classic translation factor GTPase family. EF-Tu/EF-1A subfamily. Monomer.

The protein resides in the cytoplasm. It carries out the reaction GTP + H2O = GDP + phosphate + H(+). Functionally, GTP hydrolase that promotes the GTP-dependent binding of aminoacyl-tRNA to the A-site of ribosomes during protein biosynthesis. This Bordetella avium (strain 197N) protein is Elongation factor Tu.